The primary structure comprises 291 residues: Ribosomal RNA small subunit methyltransferase A (291 aa).

S-adenosyl-L-methionine contacts are provided by N27, L29, G54, E75, D100, and N125.

The protein belongs to the class I-like SAM-binding methyltransferase superfamily. rRNA adenine N(6)-methyltransferase family. RsmA subfamily.

It localises to the cytoplasm. The catalysed reaction is adenosine(1518)/adenosine(1519) in 16S rRNA + 4 S-adenosyl-L-methionine = N(6)-dimethyladenosine(1518)/N(6)-dimethyladenosine(1519) in 16S rRNA + 4 S-adenosyl-L-homocysteine + 4 H(+). Specifically dimethylates two adjacent adenosines (A1518 and A1519) in the loop of a conserved hairpin near the 3'-end of 16S rRNA in the 30S particle. May play a critical role in biogenesis of 30S subunits. In Streptococcus mutans serotype c (strain ATCC 700610 / UA159), this protein is Ribosomal RNA small subunit methyltransferase A.